We begin with the raw amino-acid sequence, 1510 residues long: Chromosome partition protein MukB (1510 aa).

75-82 (GGNGAGKS) provides a ligand contact to ATP. The stretch at 346 to 706 (QHRLVDLSRE…LDEQISRLSQ (361 aa)) forms a coiled coil. Positions 707 to 824 (PDGSEDPRLN…EIPLFGCAAR (118 aa)) are flexible hinge. Coiled-coil stretches lie at residues 825 to 1154 (EKRL…AAKV) and 1248 to 1304 (IDAI…LQNI).

This sequence belongs to the SMC family. MukB subfamily. As to quaternary structure, homodimerization via its hinge domain. Binds to DNA via its C-terminal region. Interacts, and probably forms a ternary complex, with MukE and MukF via its C-terminal region. The complex formation is stimulated by calcium or magnesium. Interacts with tubulin-related protein FtsZ.

The protein resides in the cytoplasm. Its subcellular location is the nucleoid. Its function is as follows. Plays a central role in chromosome condensation, segregation and cell cycle progression. Functions as a homodimer, which is essential for chromosome partition. Involved in negative DNA supercoiling in vivo, and by this means organize and compact chromosomes. May achieve or facilitate chromosome segregation by condensation DNA from both sides of a centrally located replisome during cell division. The chain is Chromosome partition protein MukB from Haemophilus influenzae (strain ATCC 51907 / DSM 11121 / KW20 / Rd).